The chain runs to 176 residues: Salivary antigen 1 (176 aa).

A signal peptide spans 1–18; the sequence is MNYCFLVFLVYLVFAVNG.

It localises to the secreted. In Ctenocephalides felis (Cat flea), this protein is Salivary antigen 1.